The following is a 225-amino-acid chain: NAD(P)H-quinone oxidoreductase subunit K, chloroplastic (225 aa).

The [4Fe-4S] cluster site is built by C43, C44, C108, and C139.

The protein belongs to the complex I 20 kDa subunit family. In terms of assembly, NDH is composed of at least 16 different subunits, 5 of which are encoded in the nucleus. [4Fe-4S] cluster is required as a cofactor.

The protein localises to the plastid. It is found in the chloroplast thylakoid membrane. The catalysed reaction is a plastoquinone + NADH + (n+1) H(+)(in) = a plastoquinol + NAD(+) + n H(+)(out). It catalyses the reaction a plastoquinone + NADPH + (n+1) H(+)(in) = a plastoquinol + NADP(+) + n H(+)(out). Its function is as follows. NDH shuttles electrons from NAD(P)H:plastoquinone, via FMN and iron-sulfur (Fe-S) centers, to quinones in the photosynthetic chain and possibly in a chloroplast respiratory chain. The immediate electron acceptor for the enzyme in this species is believed to be plastoquinone. Couples the redox reaction to proton translocation, and thus conserves the redox energy in a proton gradient. In Lolium perenne (Perennial ryegrass), this protein is NAD(P)H-quinone oxidoreductase subunit K, chloroplastic.